The following is a 148-amino-acid chain: UPF0758 protein YeeS (148 aa).

Residues 26–148 (AFTSTRAARE…VFSFAEHGLL (123 aa)) form the MPN domain. H97, H99, and D110 together coordinate Zn(2+). The short motif at 97 to 110 (HNHPSGEVTPSKAD) is the JAMM motif element.

It belongs to the UPF0758 family.

The polypeptide is UPF0758 protein YeeS (yeeS) (Escherichia coli (strain K12)).